A 259-amino-acid chain; its full sequence is Probable dihydroorotate dehydrogenase B (NAD(+)), electron transfer subunit (259 aa).

Positions 1 to 89 constitute an FAD-binding FR-type domain; sequence MLPLNATITQ…RGPFGKGFTL (89 aa). Cys211, Cys216, Cys219, and Cys229 together coordinate [2Fe-2S] cluster.

The protein belongs to the PyrK family. As to quaternary structure, heterotetramer of 2 PyrK and 2 PyrD type B subunits. It depends on [2Fe-2S] cluster as a cofactor. Requires FAD as cofactor.

It participates in pyrimidine metabolism; UMP biosynthesis via de novo pathway; orotate from (S)-dihydroorotate (NAD(+) route): step 1/1. Functionally, responsible for channeling the electrons from the oxidation of dihydroorotate from the FMN redox center in the PyrD type B subunit to the ultimate electron acceptor NAD(+). In Methanosarcina mazei (strain ATCC BAA-159 / DSM 3647 / Goe1 / Go1 / JCM 11833 / OCM 88) (Methanosarcina frisia), this protein is Probable dihydroorotate dehydrogenase B (NAD(+)), electron transfer subunit.